We begin with the raw amino-acid sequence, 436 residues long: GTPase Der (436 aa).

2 EngA-type G domains span residues 4–167 (PIVA…KEEE) and 176–351 (IRLS…ENHK). Residues 10–17 (GRPNVGKS), 57–61 (DTGGI), 119–122 (NKVD), 182–189 (GRPNVGKS), 229–233 (DTAGM), and 294–297 (NKWD) contribute to the GTP site. Residues 352–436 (KRVQSSTLNE…PVHIIARKRN (85 aa)) form the KH-like domain.

This sequence belongs to the TRAFAC class TrmE-Era-EngA-EngB-Septin-like GTPase superfamily. EngA (Der) GTPase family. In terms of assembly, associates with the 50S ribosomal subunit.

GTPase that plays an essential role in the late steps of ribosome biogenesis. The polypeptide is GTPase Der (Staphylococcus saprophyticus subsp. saprophyticus (strain ATCC 15305 / DSM 20229 / NCIMB 8711 / NCTC 7292 / S-41)).